Reading from the N-terminus, the 85-residue chain is Electron transfer flavoprotein regulatory factor 1 homolog (85 aa).

This sequence belongs to the complex I LYR family. In terms of tissue distribution, highly expressed in the larval fat body.

The protein resides in the mitochondrion. Acts as a regulator of the electron transfer flavoprotein by promoting the removal of flavin from the ETF holoenzyme. May act with the ETF complex to coordinate lipid homeostasis in the fat body in response to stage-specific demands. This chain is Electron transfer flavoprotein regulatory factor 1 homolog, found in Drosophila melanogaster (Fruit fly).